An 855-amino-acid polypeptide reads, in one-letter code: MKSERARRGAGGSGDLGAGFKYTSRPENMNGCEEGVEFLPANNSSKVEKGGPRRWVVLMAVLAAFLALSLLAGLLAWHFQDRNVRVQKIFNGYLSVRNENFLDAYENSNSTEFANLAKKVKEALKFLYSGIPVLGPYHKTSTVTAFSEGSVIAYYWSEFDIPKHLVKEAEQAMAEKRMVTVPPRARSMSSFVMTSVVAFPSDPRIIQNTQDNSCSFALHAQGSEPIRFSTPGFPDSPYPSHARCQWTLRGDADSVLSLTFRSFDVATCDERGSDLVTVYDTLSPVEPRAVVQLCGTYPPSYNLTFLSSQNVLLITLVTSTERRHPGFEAVFFQLPRMSSCGGYLRAAQGTFNSPYYPGHYPPNINCTWHIEVPDNKNVKVRFKAFFLQEPNVPVGSCTKDYVEINGEKYCGERPQFVASSRNNKITVHFHSDQSYTDTGFLAEFLSFDARDPCPGSFMCNTGRCIRKELRCDGWADCTDYSDELDCKCNATYQFTCRDKFCKPLFWVCDSVKDCEDGSDEEGCSCPPNTFKCGNGKCLPQSQQCDRKDDCGDGSDEAKCQDGKAVPCTEHTHRCLNGLCVDKSNPQCDGNEDCTDGSDEKDCDCGRRSFTRQSRVVGGENSDQGEWPWQVSLHAQGHGHLCGASLISPSWMISAAHCFVDDRGFRYSEHSVWTAFLGLHDQSKRNAPGVQERGLQRIIKHPFFNDFTFDYDIALLQLDRPVEYSATIRPICLPAADYTFPTGKAIWVTGWGHTQEAGQGAMILQKGEIRVINQTTCEHLLPQQITPRMICVGYLSGGVDACQGDSGGPLSSPEEDGRMFQAGVVSWGEGCAQRNKPGVYTRLPVFRDWIKAQIGV.

A disordered region spans residues 1–21; sequence MKSERARRGAGGSGDLGAGFK. Over 1 to 55 the chain is Cytoplasmic; that stretch reads MKSERARRGAGGSGDLGAGFKYTSRPENMNGCEEGVEFLPANNSSKVEKGGPRRW. At serine 13 the chain carries Phosphoserine. A helical; Signal-anchor for type II membrane protein membrane pass occupies residues 56–76; the sequence is VVLMAVLAAFLALSLLAGLLA. Residues 77–855 lie on the Extracellular side of the membrane; it reads WHFQDRNVRV…RDWIKAQIGV (779 aa). In terms of domain architecture, SEA spans 86 to 203; sequence VQKIFNGYLS…TSVVAFPSDP (118 aa). N-linked (GlcNAc...) asparagine glycosylation occurs at asparagine 109. Cysteine 214 and cysteine 244 form a disulfide bridge. 2 CUB domains span residues 214–334 and 340–447; these read CSFA…FFQL and CGGY…FLSF. N-linked (GlcNAc...) asparagine glycans are attached at residues asparagine 302 and asparagine 365. Cystine bridges form between cysteine 340–cysteine 366, cysteine 397–cysteine 410, cysteine 453–cysteine 464, cysteine 459–cysteine 477, cysteine 471–cysteine 486, cysteine 488–cysteine 501, cysteine 496–cysteine 514, cysteine 508–cysteine 523, cysteine 525–cysteine 537, cysteine 532–cysteine 550, cysteine 544–cysteine 559, cysteine 567–cysteine 579, cysteine 574–cysteine 593, cysteine 587–cysteine 602, and cysteine 641–cysteine 657. 4 LDL-receptor class A domains span residues 452 to 487, 487 to 524, 524 to 560, and 566 to 603; these read PCPG…LDCK, KCNA…EGCS, SCPP…AKCQ, and PCTE…KDCD. Asparagine 489 is a glycosylation site (N-linked (GlcNAc...) asparagine). The region spanning 615–854 is the Peptidase S1 domain; sequence VVGGENSDQG…FRDWIKAQIG (240 aa). Catalysis depends on charge relay system residues histidine 656 and aspartate 711. Asparagine 772 carries an N-linked (GlcNAc...) asparagine glycan. 2 cysteine pairs are disulfide-bonded: cysteine 776-cysteine 790 and cysteine 801-cysteine 830. Residue serine 805 is the Charge relay system of the active site.

Belongs to the peptidase S1 family. In terms of assembly, interacts with CDCP1. May interact with TMEFF1.

The protein resides in the membrane. It carries out the reaction Cleaves various synthetic substrates with Arg or Lys at the P1 position and prefers small side-chain amino acids, such as Ala and Gly, at the P2 position.. Functionally, exhibits trypsin-like activity as defined by cleavage of synthetic substrates with Arg or Lys as the P1 site. Involved in the terminal differentiation of keratinocytes through prostasin (PRSS8) activation and filaggrin (FLG) processing. Proteolytically cleaves and therefore activates TMPRSS13. The polypeptide is Suppressor of tumorigenicity 14 protein homolog (ST14) (Bos taurus (Bovine)).